The chain runs to 1250 residues: Protein SSD1 (1250 aa).

The segment covering 1–22 has biased composition (polar residues); it reads MSKNSNVNNNRSQEPNNMFVQT. The disordered stretch occupies residues 1-32; that stretch reads MSKNSNVNNNRSQEPNNMFVQTTGGGKNAPKQ. N-acetylserine is present on S2. At S40 the chain carries Phosphoserine. The interval 79–163 is disordered; the sequence is TGQYLSGNSG…SSIYGHSRRH (85 aa). A compositionally biased stretch (polar residues) spans 84–94; the sequence is SGNSGSNNHFT. Residues 124-145 show a composition bias toward low complexity; it reads NNSGYYHNSYDNNNNSNNPGSN. Phosphoserine occurs at positions 164 and 183. Over residues 197–208 the composition is skewed to polar residues; it reads QADSGSNSTTEQ. Disordered stretches follow at residues 197–338, 418–443, and 455–517; these read QADS…GGRK, KEKE…SSDD, and SNNF…DDVE. T227 bears the Phosphothreonine mark. The span at 264 to 276 shows a compositional bias: polar residues; it reads NEYSPGINSNWRN. Over residues 277-287 the composition is skewed to low complexity; that stretch reads QSQQPQQQLSP. Residues S286 and S322 each carry the phosphoserine modification. The segment covering 319–329 has biased composition (polar residues); sequence SNSSVHSFSSQ. Residues 481-495 show a composition bias toward polar residues; the sequence is STINNDSDSLSSPTK. A phosphoserine mark is found at S491 and S492. Residues 497–510 show a composition bias toward basic residues; the sequence is GVRRRSSLKQRPTQ. The region spanning 582 to 657 is the CSD2 domain; it reads AWFKPTDKKV…EIDSILRDNN (76 aa). Residue Y688 is modified to Phosphotyrosine. Positions 694–1015 constitute an RNB domain; that stretch reads DTNEYNIFAI…VHRQLKAVIH (322 aa). Positions 1064 to 1148 constitute a DIS3L2 C-terminal domain; the sequence is GQLLTMATVL…SIKNKFRSTA (85 aa).

It belongs to the RNR ribonuclease family.

In terms of biological role, can suppress the lethality due to deletion of SIT4, and partially the defects due to BCY1 disruption. Is implicated in the control of the cell cycle G1 phase. The polypeptide is Protein SSD1 (SSD1) (Saccharomyces cerevisiae (strain ATCC 204508 / S288c) (Baker's yeast)).